A 207-amino-acid chain; its full sequence is Ribosomal RNA small subunit methyltransferase G (207 aa).

S-adenosyl-L-methionine is bound by residues Gly-74, Leu-79, 125–126 (VE), and Arg-140.

It belongs to the methyltransferase superfamily. RNA methyltransferase RsmG family.

Its subcellular location is the cytoplasm. It catalyses the reaction guanosine(527) in 16S rRNA + S-adenosyl-L-methionine = N(7)-methylguanosine(527) in 16S rRNA + S-adenosyl-L-homocysteine. In terms of biological role, specifically methylates the N7 position of guanine in position 527 of 16S rRNA. The sequence is that of Ribosomal RNA small subunit methyltransferase G from Shewanella pealeana (strain ATCC 700345 / ANG-SQ1).